Consider the following 149-residue polypeptide: Transcriptional repressor NrdR (149 aa).

A zinc finger spans residues 3–34 (CPFCAAEETKVVDSRLAADGYQIRRRRECTSC). One can recognise an ATP-cone domain in the interval 49-139 (PYVIKNNGNR…VYLSFDDIEE (91 aa)).

It belongs to the NrdR family. Zn(2+) serves as cofactor.

Functionally, negatively regulates transcription of bacterial ribonucleotide reductase nrd genes and operons by binding to NrdR-boxes. The chain is Transcriptional repressor NrdR from Actinobacillus pleuropneumoniae serotype 3 (strain JL03).